The following is a 114-amino-acid chain: uncharacterized protein (114 aa).

This is an uncharacterized protein from Escherichia coli O6:H1 (strain CFT073 / ATCC 700928 / UPEC).